Reading from the N-terminus, the 318-residue chain is tRNA-cytidine(32) 2-sulfurtransferase (318 aa).

Residues 52 to 57 (SGGKDS) carry the PP-loop motif motif. Positions 127, 130, and 218 each coordinate [4Fe-4S] cluster.

It belongs to the TtcA family. In terms of assembly, homodimer. Mg(2+) serves as cofactor. The cofactor is [4Fe-4S] cluster.

It localises to the cytoplasm. The enzyme catalyses cytidine(32) in tRNA + S-sulfanyl-L-cysteinyl-[cysteine desulfurase] + AH2 + ATP = 2-thiocytidine(32) in tRNA + L-cysteinyl-[cysteine desulfurase] + A + AMP + diphosphate + H(+). Its pathway is tRNA modification. In terms of biological role, catalyzes the ATP-dependent 2-thiolation of cytidine in position 32 of tRNA, to form 2-thiocytidine (s(2)C32). The sulfur atoms are provided by the cysteine/cysteine desulfurase (IscS) system. This Actinobacillus pleuropneumoniae serotype 3 (strain JL03) protein is tRNA-cytidine(32) 2-sulfurtransferase.